Reading from the N-terminus, the 303-residue chain is Probable serine acetyltransferase 1 (303 aa).

2 disordered regions span residues 1–36 and 271–290; these read MTAG…ESDA and NPAR…ESMD.

It belongs to the transferase hexapeptide repeat family. In terms of assembly, homomultimer.

It carries out the reaction L-serine + acetyl-CoA = O-acetyl-L-serine + CoA. It functions in the pathway amino-acid biosynthesis; L-cysteine biosynthesis; L-cysteine from L-serine: step 1/2. This is Probable serine acetyltransferase 1 (SAT1) from Oryza sativa subsp. japonica (Rice).